We begin with the raw amino-acid sequence, 376 residues long: tRNA-specific 2-thiouridylase MnmA (376 aa).

ATP is bound by residues 17–24 (GMSGGVDS) and M43. The interval 103–105 (NPD) is interaction with target base in tRNA. C108 serves as the catalytic Nucleophile. The cysteines at positions 108 and 204 are disulfide-linked. G132 contacts ATP. The interval 154–156 (KDQ) is interaction with tRNA. Residue C204 is the Cysteine persulfide intermediate of the active site. The interaction with tRNA stretch occupies residues 316–317 (RY).

The protein belongs to the MnmA/TRMU family.

It is found in the cytoplasm. The enzyme catalyses S-sulfanyl-L-cysteinyl-[protein] + uridine(34) in tRNA + AH2 + ATP = 2-thiouridine(34) in tRNA + L-cysteinyl-[protein] + A + AMP + diphosphate + H(+). Catalyzes the 2-thiolation of uridine at the wobble position (U34) of tRNA, leading to the formation of s(2)U34. In Pseudomonas syringae pv. syringae (strain B728a), this protein is tRNA-specific 2-thiouridylase MnmA.